Consider the following 364-residue polypeptide: Aminomethyltransferase (364 aa).

This sequence belongs to the GcvT family. The glycine cleavage system is composed of four proteins: P, T, L and H.

It catalyses the reaction N(6)-[(R)-S(8)-aminomethyldihydrolipoyl]-L-lysyl-[protein] + (6S)-5,6,7,8-tetrahydrofolate = N(6)-[(R)-dihydrolipoyl]-L-lysyl-[protein] + (6R)-5,10-methylene-5,6,7,8-tetrahydrofolate + NH4(+). The glycine cleavage system catalyzes the degradation of glycine. In Salmonella paratyphi A (strain AKU_12601), this protein is Aminomethyltransferase.